A 395-amino-acid chain; its full sequence is Mitogen-activated protein kinase 6 (395 aa).

A disordered region spans residues 1-35 (MDGGSGQPAADTEMTEAPGGFPAAAPSPQMPGIEN). The span at 17–27 (APGGFPAAAPS) shows a compositional bias: low complexity. Residues 63–348 (KPPIMPIGKG…VLDALAHPYL (286 aa)) enclose the Protein kinase domain. ATP is bound by residues 69 to 77 (IGKGAYGIV) and lysine 92. Aspartate 189 functions as the Proton acceptor in the catalytic mechanism. At threonine 221 the chain carries Phosphothreonine. A TXY motif is present at residues 221 to 223 (TEY). Tyrosine 223 carries the phosphotyrosine modification. Position 226 is a phosphothreonine (threonine 226).

This sequence belongs to the protein kinase superfamily. CMGC Ser/Thr protein kinase family. MAP kinase subfamily. Interacts with MEKK1, MKK1 and MKK2. May form a ternary complex with MEKK1 and MKK1 or MKK2. Interacts with NDPK2, AP2C1, MKP1 and PTP1. Interacts with DSPTP1B/MKP2, especially during HR-like responses triggered by fungal elicitors. Interacts with MKK4, MKK5 and MKK6. Binds to LIP5. Interacts with VQ4 and IKU1/VQ14. Interacts with RACK1A, RACK1B and RACK1C. Interacts with PTP1. Interacts with FLZ9. Binds to BASL and YDA. Dually phosphorylated on Thr-221 and Tyr-223, which activates the enzyme. Dephosphorylated by DSPTP1B/MKP2.

The protein resides in the cytoplasm. The protein localises to the nucleus. It localises to the cell cortex. The enzyme catalyses L-seryl-[protein] + ATP = O-phospho-L-seryl-[protein] + ADP + H(+). It catalyses the reaction L-threonyl-[protein] + ATP = O-phospho-L-threonyl-[protein] + ADP + H(+). Activated by threonine and tyrosine phosphorylation. Activated by the MAP kinase kinases MKK2, MKK3, MKK4, MKK5, MKK7 and MKK9. Activated in response to touch, wounding, low temperature, low humidity, salt stress, hydrogen peroxide, ozone, ACC (an ethylene precursor), jasmonic acid (JA), mastoparan and UVC. Activated in response to elicitors: oligogalacturonides, hexameric chitin fragments, fungal xylanase, and the bacterial flagellin and harpin. Activated upon Pseudomonas syringae pv. tomato DC3000 infection. Repressed by the protein phosphatase 2C AP2C1 and the protein-tyrosine-phosphatases MKP1 and PTP1. Repressed by DSPTP1B/MKP2-mediated dephosphorylation. Activated by polarized BASL. Triggered by MKKK20 in response to various abiotic stresses, including osmotic stress, cold and reactive oxygen species (ROS). Activated by MKK5 in response to abscisic acid (ABA). Functionally, mitogen-activated protein kinase (MAPK) which regulates abscisic acid (ABA) responses in a MAPKKK20-MKK5-MPK6 cascade involved in root growth (e.g. root cell division and elongation) and stomatal response. Involved in oxidative stress-mediated signaling cascade (such as ozone). Involved in the innate immune MAP kinase signaling cascade (MEKK1, MKK4/MKK5 and MPK3/MPK6) downstream of bacterial flagellin receptor FLS2. May be involved in hypersensitive response (HR)-mediated signaling cascade by modulating LIP5 phosphorylation and subsequent multivesicular bodies (MVBs) trafficking. May phosphorylate regulators of WRKY transcription factors. Phosphorylates 1-aminocyclopropane-1-carboxylic acid synthases (ACS2 and ACS6) and may be involved in the regulation of bacterial elicitor flagellin-induced ethylene production. Regulates locally gene-mediated and basal resistance response to certain pathogens. May be involved in the cold and salinity stress-mediated MAP kinase signaling cascade (MEKK1, MKK1/MKK2 and MPK4/MPK6). MKK1-MPK6 module mediates abscisic acid (ABA)-dependent CAT1 expression with H(2)O(2) production and response to drought and salt stress. MKK1-MPK6 module is also involved in sugar signaling during the process of seed germination. MKK3-MPK6 module plays an important role in the jasmonate signal transduction pathway through the negative regulation of MYC2/JIN1 expression. MKK9-MPK3/MPK6 module phosphorylates and activates EIN3, leading to the promotion of EIN3-mediated transcription in ethylene signaling. MPK3/MPK6 cascade regulates camalexin synthesis through transcriptional regulation of the biosynthetic genes after pathogen infection. MKK9-MPK6 module positively regulates leaf senescence. YDA-MKK4/MKK5-MPK3/MPK6 module regulates stomatal cell fate before the guard mother cell (GMC) is specified. When activated, reinforces the feedback loop by phosphorylating BASL, and inhibits stomatal fate by phosphorylating SPCH. This MAPK cascade also functions downstream of the ER receptor in regulating coordinated local cell proliferation, which shapes the morphology of plant organs. This is Mitogen-activated protein kinase 6 from Arabidopsis thaliana (Mouse-ear cress).